The sequence spans 511 residues: V-type proton ATPase subunit B, brain isoform (511 aa).

An ATP-binding site is contributed by Arg400.

This sequence belongs to the ATPase alpha/beta chains family. V-ATPase is a heteromultimeric enzyme made up of two complexes: the ATP-hydrolytic V1 complex and the proton translocation V0 complex. The V1 complex consists of three catalytic AB heterodimers that form a heterohexamer, three peripheral stalks each consisting of EG heterodimers, one central rotor including subunits D and F, and the regulatory subunits C and H. The proton translocation complex V0 consists of the proton transport subunit a, a ring of proteolipid subunits c9c'', rotary subunit d, subunits e and f, and the accessory subunits ATP6AP1/Ac45 and ATP6AP2/PRR. In terms of tissue distribution, expressed in brain (at protein level). Expressed in all tissues tested, but highest in brain and in adrenal medulla.

Its subcellular location is the apical cell membrane. The protein resides in the melanosome. The protein localises to the cytoplasm. It is found in the cytoplasmic vesicle. It localises to the clathrin-coated vesicle membrane. Its subcellular location is the secretory vesicle. The protein resides in the synaptic vesicle membrane. Functionally, non-catalytic subunit of the V1 complex of vacuolar(H+)-ATPase (V-ATPase), a multisubunit enzyme composed of a peripheral complex (V1) that hydrolyzes ATP and a membrane integral complex (V0) that translocates protons. V-ATPase is responsible for acidifying and maintaining the pH of intracellular compartments and in some cell types, is targeted to the plasma membrane, where it is responsible for acidifying the extracellular environment. In renal intercalated cells, can partially compensate the lack of ATP6V1B1 and mediate secretion of protons (H+) into the urine under base-line conditions but not in conditions of acid load. The chain is V-type proton ATPase subunit B, brain isoform (ATP6V1B2) from Bos taurus (Bovine).